Reading from the N-terminus, the 240-residue chain is MSGRRPTLLVFCDSLSYYGPRGGLPADDPRIWPNIVASQLDWDVELIGRVGWTSRDVWWAATQDPRAWAALPRAGAVIFATGGMDSLPSPLPTALRELIRYIRPPWLRRRVRDLYGWLQPRLSPVSRNALPPHLTAEYLEMTRGAIDFNRPGIPVVAALPSVHIADSYGRAHHGREATARAITEWARQHGVVLVDLKAAVADQVLNGRGNPDGIHWNFEAHQAVAELMLKALAEAGVPCR.

This sequence belongs to the OctT acyltransferase family. As to quaternary structure, homotetramer.

It carries out the reaction (2R)-2-O-[alpha-D-glucopyranosyl-(1-&gt;6)-alpha-D-glucopyranosyl]-glycerate + octanoyl-CoA = (2R)-2-O-[6-O-octanoyl-alpha-D-glucopyranosyl-(1-&gt;6)-alpha-D-glucopyranosyl]-glycerate + CoA. Functionally, sugar octanoyltransferase likely involved in the biosynthesis of mycobacterial methylglucose lipopolysaccharide (MGLP). Catalyzes the transfer of an octanoyl group from octanoyl-CoA to the C6 OH of the second glucose in diglucosylglycerate (DGG). Can also use hexanoyl-CoA as acyl donor in vitro. DGG is the preferred acceptor, but to a lesser extent, GG (glucosylglycerate) can be used as substrate. DGG and GG are the two earliest intermediates in MGLP biosynthesis. The protein is Diglucosylglycerate octanoyltransferase of Mycolicibacterium hassiacum (strain DSM 44199 / CIP 105218 / JCM 12690 / 3849) (Mycobacterium hassiacum).